A 251-amino-acid polypeptide reads, in one-letter code: Phosphate import ATP-binding protein PstB 2 (251 aa).

The 242-residue stretch at 5 to 246 (LTTENLSLFY…PVKQETNDYI (242 aa)) folds into the ABC transporter domain. 37 to 44 (GPSGCGKS) provides a ligand contact to ATP.

It belongs to the ABC transporter superfamily. Phosphate importer (TC 3.A.1.7) family. As to quaternary structure, the complex is composed of two ATP-binding proteins (PstB), two transmembrane proteins (PstC and PstA) and a solute-binding protein (PstS).

It is found in the cell membrane. It catalyses the reaction phosphate(out) + ATP + H2O = ADP + 2 phosphate(in) + H(+). In terms of biological role, part of the ABC transporter complex PstSACB involved in phosphate import. Responsible for energy coupling to the transport system. The sequence is that of Phosphate import ATP-binding protein PstB 2 from Lactiplantibacillus plantarum (strain ATCC BAA-793 / NCIMB 8826 / WCFS1) (Lactobacillus plantarum).